Here is a 455-residue protein sequence, read N- to C-terminus: SVGFKAGVKDYKLTYYTPDYKTKDTDILAAFRVTPQPGVPPEEAGAAVAAESSTGTWTTVWTDGLTSLDRYKGRCYHIEPVAGEESQFIAYVAYPLDLFEEGSVTNMFTSIVGNVFGFKALRALRLEDLRIPNAYVKTFQGPPHGIQVERDKLNKYGRPLLGCTIKPKLGLSAKNYGRAVYECLRGGLDFTKDDENVNSQPFMRWRDRFLFCAEALYKAQAETGEIKGHYLNATAGTCEEMIKRAVFARELGVPIVMHDYLTGGFTANTTLSHYCRDNGLLLHIHRAMHAVIDRQKNHGMHFRVLAKALRLSGGDHIHSGTVVGKLEGEREITLGFVDLLRDDFVEKDRSRGIYFTQDWVSLPGVLPVASGGIHVWHMPALTEIFGDDSVLQFGGGTLGHPWGNAPGAVANRVALEACVQARNEGRDLASEGNQIIREASKWSPELAAACEVWKE.

Lys5 is modified (N6,N6,N6-trimethyllysine). Positions 114 and 164 each coordinate substrate. The active-site Proton acceptor is Lys166. Position 168 (Lys168) interacts with substrate. Positions 192, 194, and 195 each coordinate Mg(2+). N6-carboxylysine is present on Lys192. The active-site Proton acceptor is His285. Residues Arg286, His318, and Ser370 each contribute to the substrate site.

Belongs to the RuBisCO large chain family. Type I subfamily. As to quaternary structure, heterohexadecamer of 8 large chains and 8 small chains; disulfide-linked. The disulfide link is formed within the large subunit homodimers. Mg(2+) serves as cofactor. In terms of processing, the disulfide bond which can form in the large chain dimeric partners within the hexadecamer appears to be associated with oxidative stress and protein turnover.

Its subcellular location is the plastid. The protein resides in the chloroplast. It carries out the reaction 2 (2R)-3-phosphoglycerate + 2 H(+) = D-ribulose 1,5-bisphosphate + CO2 + H2O. The enzyme catalyses D-ribulose 1,5-bisphosphate + O2 = 2-phosphoglycolate + (2R)-3-phosphoglycerate + 2 H(+). Functionally, ruBisCO catalyzes two reactions: the carboxylation of D-ribulose 1,5-bisphosphate, the primary event in carbon dioxide fixation, as well as the oxidative fragmentation of the pentose substrate in the photorespiration process. Both reactions occur simultaneously and in competition at the same active site. The protein is Ribulose bisphosphate carboxylase large chain of Lupinus arcticus (Arctic lupine).